Reading from the N-terminus, the 123-residue chain is Protein LLP homolog (123 aa).

Residues 1 to 21 are compositionally biased toward basic residues; the sequence is MAKSIRSKWKRKMRAEKRKKN. Disordered stretches follow at residues 1–23 and 55–123; these read MAKSIRSKWKRKMRAEKRKKNAP and KINE…KLAW. Residues 70-89 show a composition bias toward basic and acidic residues; the sequence is DSSKMDMELKRNKKNLRDQH. Residues 100-123 are compositionally biased toward basic residues; that stretch reads QQKKLKSQCGKKKGKSKQAKKLAW.

Belongs to the learning-associated protein family.

The protein localises to the nucleus. It is found in the nucleolus. It localises to the chromosome. In terms of biological role, regulates dendritic and spine growth and synaptic transmission. In Xenopus tropicalis (Western clawed frog), this protein is Protein LLP homolog (llph).